Reading from the N-terminus, the 328-residue chain is D-cysteine desulfhydrase (328 aa).

Lysine 51 carries the post-translational modification N6-(pyridoxal phosphate)lysine.

It belongs to the ACC deaminase/D-cysteine desulfhydrase family. Homodimer. It depends on pyridoxal 5'-phosphate as a cofactor.

The catalysed reaction is D-cysteine + H2O = hydrogen sulfide + pyruvate + NH4(+) + H(+). Functionally, catalyzes the alpha,beta-elimination reaction of D-cysteine and of several D-cysteine derivatives. It could be a defense mechanism against D-cysteine. In Escherichia coli O7:K1 (strain IAI39 / ExPEC), this protein is D-cysteine desulfhydrase.